The chain runs to 392 residues: ATP phosphoribosyltransferase regulatory subunit (392 aa).

The protein belongs to the class-II aminoacyl-tRNA synthetase family. HisZ subfamily. Heteromultimer composed of HisG and HisZ subunits.

It localises to the cytoplasm. Its pathway is amino-acid biosynthesis; L-histidine biosynthesis; L-histidine from 5-phospho-alpha-D-ribose 1-diphosphate: step 1/9. Its function is as follows. Required for the first step of histidine biosynthesis. May allow the feedback regulation of ATP phosphoribosyltransferase activity by histidine. This is ATP phosphoribosyltransferase regulatory subunit from Prochlorococcus marinus (strain MIT 9211).